We begin with the raw amino-acid sequence, 185 residues long: MISAGDFRKGVTFVMDGHPYVVIDFQHVKPGKGAAFVRTKYKNLKTGSTREEAFNPSDKFPRAHIETKEMQYLYNDSDLYYFMDNETYEQVPLTLVEVEDAIKYLKENDSAIIKFYEGRPFQVEPPIFVELKVIETEPGVKGDTATNVTKAATVETGAIVYVPVFVNEGNIIKVDTRTGEYMSRV.

The protein belongs to the elongation factor P family.

It is found in the cytoplasm. The protein operates within protein biosynthesis; polypeptide chain elongation. Functionally, involved in peptide bond synthesis. Stimulates efficient translation and peptide-bond synthesis on native or reconstituted 70S ribosomes in vitro. Probably functions indirectly by altering the affinity of the ribosome for aminoacyl-tRNA, thus increasing their reactivity as acceptors for peptidyl transferase. This Alkaliphilus metalliredigens (strain QYMF) protein is Elongation factor P.